The following is a 205-amino-acid chain: Small ribosomal subunit protein bS16 (205 aa).

Residues 110 to 205 are disordered; that stretch reads GEEVKIAVGT…ADDNEEPEDE (96 aa). Over residues 123–132 the composition is skewed to basic and acidic residues; sequence DPLERERERA. Over residues 153-205 the composition is skewed to acidic residues; sequence EETEAEEAEDVETADAEDADAASETDEPEAAADEADETDASADADDNEEPEDE.

Belongs to the bacterial ribosomal protein bS16 family.

The polypeptide is Small ribosomal subunit protein bS16 (Salinibacter ruber (strain DSM 13855 / M31)).